The following is a 441-amino-acid chain: UPF0761 membrane protein Clim_1521 (441 aa).

6 helical membrane-spanning segments follow: residues 54–74 (IFLSAGSLAFQTLLSIVPFLA), 122–142 (TVPLIGGLLLFIIALSLISTI), 161–181 (AFTLYWTVLTLGPVLIGSSLG), 203–223 (LISFLPFVNSLLSFLLLYMLV), 233–253 (AFSGAVAAALLFELSKKWFVF), and 266–286 (GAISAVPLLFFWIYIGWLVVL).

The protein belongs to the UPF0761 family.

It localises to the cell inner membrane. This is UPF0761 membrane protein Clim_1521 from Chlorobium limicola (strain DSM 245 / NBRC 103803 / 6330).